Consider the following 122-residue polypeptide: uncharacterized protein (122 aa).

This is an uncharacterized protein from Escherichia coli (strain K12).